A 237-amino-acid chain; its full sequence is DNA repair protein RecO (237 aa).

It belongs to the RecO family.

Its function is as follows. Involved in DNA repair and RecF pathway recombination. The sequence is that of DNA repair protein RecO from Rickettsia akari (strain Hartford).